Here is a 112-residue protein sequence, read N- to C-terminus: Cell cycle protein GpsB (112 aa).

Positions 42-77 (YQKMADMNNEVVKLSEENNKLKKEVEELRLRVATSR) form a coiled coil. A disordered region spans residues 75 to 97 (TSRPSDNKSFSSNNSSSSNNNVD). A compositionally biased stretch (low complexity) spans 81–95 (NKSFSSNNSSSSNNN).

This sequence belongs to the GpsB family. In terms of assembly, forms polymers through the coiled coil domains. Interacts with PBP1, MreC and EzrA.

Its subcellular location is the cytoplasm. Divisome component that associates with the complex late in its assembly, after the Z-ring is formed, and is dependent on DivIC and PBP2B for its recruitment to the divisome. Together with EzrA, is a key component of the system that regulates PBP1 localization during cell cycle progression. Its main role could be the removal of PBP1 from the cell pole after pole maturation is completed. Also contributes to the recruitment of PBP1 to the division complex. Not essential for septum formation. The protein is Cell cycle protein GpsB of Staphylococcus haemolyticus (strain JCSC1435).